Reading from the N-terminus, the 407-residue chain is Bifunctional enzyme IspD/IspF (407 aa).

The tract at residues Met-1–Val-247 is 2-C-methyl-D-erythritol 4-phosphate cytidylyltransferase. The interval Arg-248–Gln-407 is 2-C-methyl-D-erythritol 2,4-cyclodiphosphate synthase. Asp-254 and His-256 together coordinate a divalent metal cation. 4-CDP-2-C-methyl-D-erythritol 2-phosphate contacts are provided by residues Asp-254–His-256 and His-280–Ser-281. His-288 serves as a coordination point for a divalent metal cation. 4-CDP-2-C-methyl-D-erythritol 2-phosphate contacts are provided by residues Asp-302 to Gly-304, Thr-378 to Glu-381, Phe-385, and Arg-388.

In the N-terminal section; belongs to the IspD/TarI cytidylyltransferase family. IspD subfamily. This sequence in the C-terminal section; belongs to the IspF family. Requires a divalent metal cation as cofactor.

It catalyses the reaction 2-C-methyl-D-erythritol 4-phosphate + CTP + H(+) = 4-CDP-2-C-methyl-D-erythritol + diphosphate. The catalysed reaction is 4-CDP-2-C-methyl-D-erythritol 2-phosphate = 2-C-methyl-D-erythritol 2,4-cyclic diphosphate + CMP. It functions in the pathway isoprenoid biosynthesis; isopentenyl diphosphate biosynthesis via DXP pathway; isopentenyl diphosphate from 1-deoxy-D-xylulose 5-phosphate: step 2/6. The protein operates within isoprenoid biosynthesis; isopentenyl diphosphate biosynthesis via DXP pathway; isopentenyl diphosphate from 1-deoxy-D-xylulose 5-phosphate: step 4/6. Its function is as follows. Bifunctional enzyme that catalyzes the formation of 4-diphosphocytidyl-2-C-methyl-D-erythritol from CTP and 2-C-methyl-D-erythritol 4-phosphate (MEP) (IspD), and catalyzes the conversion of 4-diphosphocytidyl-2-C-methyl-D-erythritol 2-phosphate (CDP-ME2P) to 2-C-methyl-D-erythritol 2,4-cyclodiphosphate (ME-CPP) with a corresponding release of cytidine 5-monophosphate (CMP) (IspF). This Allorhizobium ampelinum (strain ATCC BAA-846 / DSM 112012 / S4) (Agrobacterium vitis (strain S4)) protein is Bifunctional enzyme IspD/IspF.